Reading from the N-terminus, the 469-residue chain is MCDLIEPQPAEKIGKMKKLRRTLSESFSRIALKKDDTTFDEICVTKMSTRNCQGMDSVIKPLDTIPEDKKVRVQRTQSTFDPFEKPANQVKRVHSENNACINFKTSSTGKESPKVRRHSSPSSPTSPKFGKADSYEKLEKLGEGSYATVYKGKSKVNGKLVALKVIRLQEEEGTPFTAIREASLLKGLKHANIVLLHDIIHTKETLTLVFEYVHTDLCQYMDKHPGGLHPDNVKLFLFQLLRGLSYIHQRYILHRDLKPQNLLISDTGELKLADFGLARAKSVPSHTYSNEVVTLWYRPPDVLLGSTEYSTCLDMWGVGCIFVEMIQGVAAFPGMKDIQDQLERIFLVLGTPNEDTWPGVHSLPHFKPERFTLYSSKNLRQAWNKLSYVNHAEDLASKLLQCSPKNRLSAQAALSHEYFSDLPPRLWELTDMSSIFTVPNVRLQPEAGESMRAFGKNNSYGKSLSNSKH.

Phosphoserine occurs at positions 24, 78, and 95. A disordered region spans residues Phe-103–Asp-133. A Phosphoserine modification is found at Ser-134. In terms of domain architecture, Protein kinase spans Tyr-135 to Phe-419. ATP contacts are provided by residues Leu-141–Val-149 and Lys-164. Asp-256 acts as the Proton acceptor in catalysis. Residues Glu-449–His-469 are disordered. A compositionally biased stretch (polar residues) spans Lys-456–His-469.

Belongs to the protein kinase superfamily. CMGC Ser/Thr protein kinase family. CDC2/CDKX subfamily. Found in a complex with LRP6, CCNY and CAPRIN2 during G2/M stage; CAPRIN2 functions as a scaffold for the complex by binding to CCNY via its N terminus and to CDK14 via its C terminus. Interacts with CCNY; CCNY mediates its recruitment to the plasma membrane and promotes phosphorylation of LRP6. Interacts with CCDN3 and CDKN1A. Interacts with SEPT8. Interacts with 14-3-3 proteina YWHAB, YWHAE, YWHAH and YWHAQ. As to expression, highly expressed in brain, pancreas, kidney, heart, testis and ovary. Also detected at lower levels in other tissues except in spleen and thymus where expression is barely detected.

It is found in the cell membrane. The protein localises to the cytoplasm. The protein resides in the nucleus. The catalysed reaction is L-seryl-[protein] + ATP = O-phospho-L-seryl-[protein] + ADP + H(+). The enzyme catalyses L-threonyl-[protein] + ATP = O-phospho-L-threonyl-[protein] + ADP + H(+). Its activity is regulated as follows. Serine/threonine-protein kinase activity is promoted by associated cyclins CCDN3 and CCNY and repressed by CDKN1A. Its function is as follows. Serine/threonine-protein kinase involved in the control of the eukaryotic cell cycle, whose activity is controlled by an associated cyclin. Acts as a cell-cycle regulator of Wnt signaling pathway during G2/M phase by mediating the phosphorylation of LRP6 at 'Ser-1490', leading to the activation of the Wnt signaling pathway. Acts as a regulator of cell cycle progression and cell proliferation via its interaction with CCDN3. Phosphorylates RB1 in vitro, however the relevance of such result remains to be confirmed in vivo. May also play a role in meiosis, neuron differentiation and may indirectly act as a negative regulator of insulin-responsive glucose transport. This is Cyclin-dependent kinase 14 (CDK14) from Homo sapiens (Human).